Consider the following 422-residue polypeptide: Enolase (422 aa).

Residue Q162 coordinates (2R)-2-phosphoglycerate. The active-site Proton donor is E204. Positions 241, 284, and 311 each coordinate Mg(2+). (2R)-2-phosphoglycerate is bound by residues K336, R365, S366, and K387. The active-site Proton acceptor is K336.

The protein belongs to the enolase family. In terms of assembly, component of the RNA degradosome, a multiprotein complex involved in RNA processing and mRNA degradation. Mg(2+) is required as a cofactor.

Its subcellular location is the cytoplasm. It is found in the secreted. It localises to the cell surface. The enzyme catalyses (2R)-2-phosphoglycerate = phosphoenolpyruvate + H2O. It functions in the pathway carbohydrate degradation; glycolysis; pyruvate from D-glyceraldehyde 3-phosphate: step 4/5. Catalyzes the reversible conversion of 2-phosphoglycerate (2-PG) into phosphoenolpyruvate (PEP). It is essential for the degradation of carbohydrates via glycolysis. The protein is Enolase of Legionella pneumophila (strain Paris).